Reading from the N-terminus, the 253-residue chain is Phosphate import ATP-binding protein PstB (253 aa).

The 244-residue stretch at 5-248 (IETINLHVYY…PEHELTEKYV (244 aa)) folds into the ABC transporter domain. Residue 37-44 (GPSGCGKS) coordinates ATP.

Belongs to the ABC transporter superfamily. Phosphate importer (TC 3.A.1.7) family. As to quaternary structure, the complex is composed of two ATP-binding proteins (PstB), two transmembrane proteins (PstC and PstA) and a solute-binding protein (PstS).

It is found in the cell membrane. It catalyses the reaction phosphate(out) + ATP + H2O = ADP + 2 phosphate(in) + H(+). In terms of biological role, part of the ABC transporter complex PstSACB involved in phosphate import. Responsible for energy coupling to the transport system. This chain is Phosphate import ATP-binding protein PstB, found in Pyrococcus furiosus (strain ATCC 43587 / DSM 3638 / JCM 8422 / Vc1).